Reading from the N-terminus, the 501-residue chain is Nuclear receptor-binding protein 2 (501 aa).

The disordered stretch occupies residues 1 to 33 (MAAPEPAPRRAREREREREDESEDESDILEESP). Residues 7 to 19 (APRRARERERERE) are compositionally biased toward basic and acidic residues. Residues 20 to 30 (DESEDESDILE) are compositionally biased toward acidic residues. A Protein kinase domain is found at 38–306 (QKRREQVNQG…AHSLLFHRVL (269 aa)). Thr409 and Thr411 each carry phosphothreonine.

Belongs to the protein kinase superfamily. Ser/Thr protein kinase family.

The protein localises to the cytoplasm. Functionally, may regulate apoptosis of neural progenitor cells during their differentiation. The sequence is that of Nuclear receptor-binding protein 2 from Homo sapiens (Human).